The sequence spans 786 residues: Endonuclease MutS2 (786 aa).

Residue 335 to 342 coordinates ATP; sequence GPNTGGKT. The region spanning 711-786 is the Smr domain; the sequence is LDLRGERFEN…GLGVTVVELK (76 aa).

The protein belongs to the DNA mismatch repair MutS family. MutS2 subfamily. Homodimer. Binds to stalled ribosomes, contacting rRNA.

Functionally, endonuclease that is involved in the suppression of homologous recombination and thus may have a key role in the control of bacterial genetic diversity. Its function is as follows. Acts as a ribosome collision sensor, splitting the ribosome into its 2 subunits. Detects stalled/collided 70S ribosomes which it binds and splits by an ATP-hydrolysis driven conformational change. Acts upstream of the ribosome quality control system (RQC), a ribosome-associated complex that mediates the extraction of incompletely synthesized nascent chains from stalled ribosomes and their subsequent degradation. Probably generates substrates for RQC. The polypeptide is Endonuclease MutS2 (Bacillus cytotoxicus (strain DSM 22905 / CIP 110041 / 391-98 / NVH 391-98)).